The sequence spans 184 residues: Ribosome-recycling factor (184 aa).

The protein belongs to the RRF family.

Its subcellular location is the cytoplasm. Responsible for the release of ribosomes from messenger RNA at the termination of protein biosynthesis. May increase the efficiency of translation by recycling ribosomes from one round of translation to another. The sequence is that of Ribosome-recycling factor from Psychrobacter sp. (strain PRwf-1).